The sequence spans 286 residues: ATP synthase gamma chain (286 aa).

It belongs to the ATPase gamma chain family. F-type ATPases have 2 components, CF(1) - the catalytic core - and CF(0) - the membrane proton channel. CF(1) has five subunits: alpha(3), beta(3), gamma(1), delta(1), epsilon(1). CF(0) has three main subunits: a, b and c.

Its subcellular location is the cell inner membrane. Produces ATP from ADP in the presence of a proton gradient across the membrane. The gamma chain is believed to be important in regulating ATPase activity and the flow of protons through the CF(0) complex. The polypeptide is ATP synthase gamma chain (Shewanella denitrificans (strain OS217 / ATCC BAA-1090 / DSM 15013)).